Consider the following 140-residue polypeptide: Lysozyme D (140 aa).

The N-terminal stretch at 1 to 18 (MKAFIVLVALACAAPAFG) is a signal peptide. The C-type lysozyme domain occupies 19-140 (RTMDRCSLAR…GWLPSIDDCF (122 aa)). Intrachain disulfides connect cysteine 24–cysteine 139, cysteine 45–cysteine 129, cysteine 80–cysteine 96, and cysteine 92–cysteine 110. Catalysis depends on residues glutamate 50 and aspartate 68.

It belongs to the glycosyl hydrolase 22 family. As to expression, found in the midgut.

It carries out the reaction Hydrolysis of (1-&gt;4)-beta-linkages between N-acetylmuramic acid and N-acetyl-D-glucosamine residues in a peptidoglycan and between N-acetyl-D-glucosamine residues in chitodextrins.. Unlikely to play an active role in the humoral immune defense. May have a function in the digestion of bacteria in the food. In Drosophila melanogaster (Fruit fly), this protein is Lysozyme D (LysD).